The primary structure comprises 141 residues: MASFQCDIVSAEKAIFSGSAEQLIAAGVSGDLGILRGHAPLLTELKPGPVRVMREGGEEEVYYVTGGFLEVQPDVVSVLADTATRAHDLDEAAAEEARQEALKAMGDKQSDLDYTRAAAELAEAVAQLRTIQQLREKGSRR.

Belongs to the ATPase epsilon chain family. In terms of assembly, F-type ATPases have 2 components, CF(1) - the catalytic core - and CF(0) - the membrane proton channel. CF(1) has five subunits: alpha(3), beta(3), gamma(1), delta(1), epsilon(1). CF(0) has three main subunits: a, b and c.

Its subcellular location is the cell inner membrane. Functionally, produces ATP from ADP in the presence of a proton gradient across the membrane. This chain is ATP synthase epsilon chain, found in Chromohalobacter salexigens (strain ATCC BAA-138 / DSM 3043 / CIP 106854 / NCIMB 13768 / 1H11).